Reading from the N-terminus, the 213-residue chain is Glycerol-3-phosphate acyltransferase (213 aa).

A run of 6 helical transmembrane segments spans residues 3 to 23, 48 to 68, 71 to 91, 119 to 139, 144 to 164, and 165 to 185; these read IIIL…GLWI, ILGV…GTLA, LPLI…LAVI, PFFL…FSMI, VVAA…GFIL, and TSYD…IIFR.

This sequence belongs to the PlsY family. As to quaternary structure, probably interacts with PlsX.

Its subcellular location is the cell membrane. It carries out the reaction an acyl phosphate + sn-glycerol 3-phosphate = a 1-acyl-sn-glycero-3-phosphate + phosphate. The protein operates within lipid metabolism; phospholipid metabolism. Its function is as follows. Catalyzes the transfer of an acyl group from acyl-phosphate (acyl-PO(4)) to glycerol-3-phosphate (G3P) to form lysophosphatidic acid (LPA). This enzyme utilizes acyl-phosphate as fatty acyl donor, but not acyl-CoA or acyl-ACP. The sequence is that of Glycerol-3-phosphate acyltransferase from Lactococcus lactis subsp. cremoris (strain MG1363).